The chain runs to 88 residues: MANIKSAIKRARQNVKLRQHNASARSMYRTYIKNVLKAVESGDQEAARAAYTKAQPVIDKAANKGLIHKNKAARIKGRLVARLKAMAA.

It belongs to the bacterial ribosomal protein bS20 family.

In terms of biological role, binds directly to 16S ribosomal RNA. The chain is Small ribosomal subunit protein bS20 from Legionella pneumophila (strain Paris).